Consider the following 245-residue polypeptide: Precorrin-2 C(20)-methyltransferase (245 aa).

Belongs to the precorrin methyltransferase family. Homodimer.

It carries out the reaction precorrin-2 + S-adenosyl-L-methionine = precorrin-3A + S-adenosyl-L-homocysteine + H(+). It functions in the pathway cofactor biosynthesis; adenosylcobalamin biosynthesis; cob(II)yrinate a,c-diamide from precorrin-2 (aerobic route): step 1/10. Methylates precorrin-2 at the C-20 position to produce precorrin-3A. The protein is Precorrin-2 C(20)-methyltransferase (cobI) of Sinorhizobium sp.